We begin with the raw amino-acid sequence, 389 residues long: Transmembrane protease serine 11A (389 aa).

Topologically, residues 1-23 (MEVAGYGTHNRDLKQWMVTLLSA) are cytoplasmic. A helical; Signal-anchor for type II membrane protein membrane pass occupies residues 24–44 (LSLMMVVVTIGLLALFLVFDI). One can recognise an SEA domain in the interval 31–148 (VTIGLLALFL…SLVQVKDCGK (118 aa)). At 45–389 (QVNSNSGQKS…RHWIASKTGL (345 aa)) the chain is on the extracellular side. Residues 158 to 388 (IVSGNPAAKG…YRHWIASKTG (231 aa)) enclose the Peptidase S1 domain. Cys-183 and Cys-199 are oxidised to a cystine. Residues His-198 and Asp-243 each act as charge relay system in the active site. A glycan (N-linked (GlcNAc...) asparagine) is linked at Asn-274. 2 disulfide bridges follow: Cys-308–Cys-324 and Cys-335–Cys-364. Ser-339 functions as the Charge relay system in the catalytic mechanism.

The protein belongs to the peptidase S1 family.

Its subcellular location is the membrane. In terms of biological role, probable serine protease which may play a role in cellular senescence. Overexpression inhibits cell growth and induce G1 cell cycle arrest. This is Transmembrane protease serine 11A (Tmprss11a) from Mus musculus (Mouse).